Consider the following 240-residue polypeptide: 31 kDa outer-membrane immunogenic protein (240 aa).

The first 19 residues, 1–19 (MKSVILASIAAMFATSAMA), serve as a signal peptide directing secretion. The interval 48 to 83 (NAGYAGGKFKHPFSSFDKEDNEQVSGSLDVTAGGFV) is epitope recognized by the monoclonal antibody A59/10F09/G10.

This sequence belongs to the Omp25/RopB family. As to quaternary structure, oligomeric.

It localises to the cell outer membrane. Functionally, major outer membrane protein associated with peptidoglycans. May function as a porin. The polypeptide is 31 kDa outer-membrane immunogenic protein (omp31) (Brucella melitensis biotype 1 (strain ATCC 23456 / CCUG 17765 / NCTC 10094 / 16M)).